Reading from the N-terminus, the 396-residue chain is MIISAASDYRAAAQRILPPFLFHYMDGGAYSEYTLHRNVEDLSEVALRQRILKNMSDLSLETTLFNEKLSMPVALGPVGLCGMYARRGEVQAAKAADAHGIPFTLSTVSVCPIEEVAPAIKRPMWFQLYVLRDRGFMRNALERAKAAGCSTLVFTVDMPTPGARYRDAHSGMSGPNAAMRRYLQAVTHPQWAWDVGLNGRPHDLGNISAYLGKPTGLEDYIGWLGNNFDPSISWKDLEWIRDFWDGPMVIKGILDPEDARDAVRFGADGIVVSNHGGRQLDGVLSSARALPAIADAVKGDIAILADSGIRNGLDVVRMIALGADTVLLGRAFLYALATAGQAGVANLLNLIEKEMKVAMTLTGAKSISEITQDSLVQGLGKELPAALAPMAKGNAA.

Residues 1–380 enclose the FMN hydroxy acid dehydrogenase domain; sequence MIISAASDYR…TQDSLVQGLG (380 aa). Tyr-24 is a binding site for substrate. The FMN site is built by Ser-106 and Gln-127. Tyr-129 provides a ligand contact to substrate. Residue Thr-155 participates in FMN binding. Arg-164 is a substrate binding site. Lys-251 contributes to the FMN binding site. The active-site Proton acceptor is the His-275. Residue Arg-278 coordinates substrate. Position 306 to 330 (306 to 330) interacts with FMN; the sequence is DSGIRNGLDVVRMIALGADTVLLGR.

The protein belongs to the FMN-dependent alpha-hydroxy acid dehydrogenase family. FMN is required as a cofactor.

The protein localises to the cell inner membrane. The catalysed reaction is (S)-lactate + A = pyruvate + AH2. Functionally, catalyzes the conversion of L-lactate to pyruvate. Is coupled to the respiratory chain. The chain is L-lactate dehydrogenase from Escherichia coli O127:H6 (strain E2348/69 / EPEC).